Here is a 579-residue protein sequence, read N- to C-terminus: Thiol:disulfide interchange protein DsbD (579 aa).

A signal peptide spans 1 to 16; sequence MKKLFLFFTLIFTAFA. Intrachain disulfides connect Cys-124–Cys-129 and Cys-193–Cys-315. The next 8 membrane-spanning stretches (helical) occupy residues 178-198, 230-250, 254-274, 296-316, 337-357, 376-396, 397-417, and 420-440; these read IFGFFVLGLGLAFTPCVLPML, LTYTLLGLAVAAIGLPFQIAL, YVMIGLSILFVVLALSMFGLF, GAFGGAFAMGMIAGLVASPCT, AVTLYLLALGMGVPLMLITLF, FGFVMLALPVFLLSRILPEVW, ESRLWAGLATVFFIWFALQMS, and GFGYAIKIISFALAMVTVQPL. Positions 449-579 constitute a Thioredoxin domain; that stretch reads TTTQSAVENM…AFSNWIEKLL (131 aa). Cys-495 and Cys-498 are disulfide-bonded.

Belongs to the thioredoxin family. DsbD subfamily.

Its subcellular location is the cell inner membrane. It catalyses the reaction [protein]-dithiol + NAD(+) = [protein]-disulfide + NADH + H(+). The catalysed reaction is [protein]-dithiol + NADP(+) = [protein]-disulfide + NADPH + H(+). Functionally, required to facilitate the formation of correct disulfide bonds in some periplasmic proteins and for the assembly of the periplasmic c-type cytochromes. Acts by transferring electrons from cytoplasmic thioredoxin to the periplasm. This transfer involves a cascade of disulfide bond formation and reduction steps. This Haemophilus influenzae (strain PittGG) protein is Thiol:disulfide interchange protein DsbD.